The primary structure comprises 372 residues: Embryonic growth/differentiation factor 1 (372 aa).

The first 29 residues, 1 to 29, serve as a signal peptide directing secretion; that stretch reads MPPPQQGPCGHHLLLLLALLLPSLPLTRA. Residues 30–253 constitute a propeptide that is removed on maturation; the sequence is PVPPGPAAAL…LCHPLARPRR (224 aa). The tract at residues 67-86 is disordered; the sequence is RRRDPQETRSGSRRTSPGVT. A glycan (N-linked (GlcNAc...) asparagine) is linked at Asn-206. Intrachain disulfides connect Cys-267–Cys-337, Cys-296–Cys-369, and Cys-300–Cys-371.

It belongs to the TGF-beta family. Homodimer; disulfide-linked. As to expression, expressed in the brain.

The protein resides in the secreted. In terms of biological role, may mediate cell differentiation events during embryonic development. The chain is Embryonic growth/differentiation factor 1 (GDF1) from Homo sapiens (Human).